Here is a 332-residue protein sequence, read N- to C-terminus: Probable farnesyl diphosphate synthase (332 aa).

Residues lysine 75, arginine 78, and histidine 107 each contribute to the isopentenyl diphosphate site. Mg(2+) contacts are provided by aspartate 114 and aspartate 120. A (2E)-geranyl diphosphate-binding site is contributed by arginine 125. Arginine 126 provides a ligand contact to isopentenyl diphosphate. (2E)-geranyl diphosphate contacts are provided by lysine 208, serine 209, glutamine 250, and lysine 267.

It belongs to the FPP/GGPP synthase family. It depends on Mg(2+) as a cofactor.

It localises to the cytoplasm. The enzyme catalyses isopentenyl diphosphate + (2E)-geranyl diphosphate = (2E,6E)-farnesyl diphosphate + diphosphate. The sequence is that of Probable farnesyl diphosphate synthase (fppS) from Bradyrhizobium diazoefficiens (strain JCM 10833 / BCRC 13528 / IAM 13628 / NBRC 14792 / USDA 110).